Here is a 99-residue protein sequence, read N- to C-terminus: MAEDHPSVDLDTHLSSPRESEESAPKKNRQFYRKKVCRFCTQKLLADYKDPDTLRRFITERGKILPRRITGTCAKHQRRVALEVKRSRAVALLPFVLTE.

Residues 1-25 (MAEDHPSVDLDTHLSSPRESEESAP) are compositionally biased toward basic and acidic residues. Positions 1–28 (MAEDHPSVDLDTHLSSPRESEESAPKKN) are disordered.

It belongs to the bacterial ribosomal protein bS18 family. Part of the 30S ribosomal subunit. Forms a tight heterodimer with protein bS6.

In terms of biological role, binds as a heterodimer with protein bS6 to the central domain of the 16S rRNA, where it helps stabilize the platform of the 30S subunit. This is Small ribosomal subunit protein bS18 from Treponema pallidum (strain Nichols).